The primary structure comprises 367 residues: tRNA uridine(34) hydroxylase (367 aa).

The 91-residue stretch at 159–249 (EDKNSIVVDV…GIISYAHEIS (91 aa)) folds into the Rhodanese domain. Catalysis depends on cysteine 213, which acts as the Cysteine persulfide intermediate.

This sequence belongs to the TrhO family.

It catalyses the reaction uridine(34) in tRNA + AH2 + O2 = 5-hydroxyuridine(34) in tRNA + A + H2O. Its function is as follows. Catalyzes oxygen-dependent 5-hydroxyuridine (ho5U) modification at position 34 in tRNAs. This is tRNA uridine(34) hydroxylase from Leptospira borgpetersenii serovar Hardjo-bovis (strain L550).